The primary structure comprises 510 residues: NAD(P)H-quinone oxidoreductase subunit 2 B, chloroplastic (510 aa).

13 helical membrane-spanning segments follow: residues 24–44 (LLLFDGSFIFPECILIFGLIL), 57–77 (IPWFYFISSTSLVMSITALLF), 99–119 (IFQFLILLCSTLCIPLSVEYI), 124–144 (MAITEFLLFVLTATLGGMFLC), 149–169 (LITIFVAPECFSLCSYLLSGY), 183–203 (YLLMGGASSSILVHGFSWLYG), 227–247 (PGILIALLFITVGIGFKLSLA), 295–315 (WHLLLEILAILSMILGNLIAI), 323–343 (MLAYSSIGQIGYVIIGIIVGD), 354–374 (YMLFYISMNLGTFACIVLFGL), 395–415 (ALSLALCLLSLGGLPPLAGFF), 428–448 (GLYFLVSIGLLTSVISIYYYL), and 484–504 (MIVCVIASTIPGISMNPIIAI).

The protein belongs to the complex I subunit 2 family. In terms of assembly, NDH is composed of at least 16 different subunits, 5 of which are encoded in the nucleus.

The protein localises to the plastid. Its subcellular location is the chloroplast thylakoid membrane. It catalyses the reaction a plastoquinone + NADH + (n+1) H(+)(in) = a plastoquinol + NAD(+) + n H(+)(out). The catalysed reaction is a plastoquinone + NADPH + (n+1) H(+)(in) = a plastoquinol + NADP(+) + n H(+)(out). Its function is as follows. NDH shuttles electrons from NAD(P)H:plastoquinone, via FMN and iron-sulfur (Fe-S) centers, to quinones in the photosynthetic chain and possibly in a chloroplast respiratory chain. The immediate electron acceptor for the enzyme in this species is believed to be plastoquinone. Couples the redox reaction to proton translocation, and thus conserves the redox energy in a proton gradient. This chain is NAD(P)H-quinone oxidoreductase subunit 2 B, chloroplastic, found in Eucalyptus globulus subsp. globulus (Tasmanian blue gum).